Here is a 271-residue protein sequence, read N- to C-terminus: Bis(5'-nucleosyl)-tetraphosphatase, symmetrical (271 aa).

The protein belongs to the Ap4A hydrolase family.

It carries out the reaction P(1),P(4)-bis(5'-adenosyl) tetraphosphate + H2O = 2 ADP + 2 H(+). Hydrolyzes diadenosine 5',5'''-P1,P4-tetraphosphate to yield ADP. The chain is Bis(5'-nucleosyl)-tetraphosphatase, symmetrical from Aliivibrio fischeri (strain ATCC 700601 / ES114) (Vibrio fischeri).